We begin with the raw amino-acid sequence, 31 residues long: Hemocyanin subunit 2 (31 aa).

This sequence belongs to the tyrosinase family. Hemocyanin subfamily. In terms of tissue distribution, hemolymph.

The protein localises to the secreted. It is found in the extracellular space. Its function is as follows. Hemocyanins are copper-containing oxygen carriers occurring freely dissolved in the hemolymph of many mollusks and arthropods. The sequence is that of Hemocyanin subunit 2 from Maja squinado (Mediterranean spider crab).